We begin with the raw amino-acid sequence, 300 residues long: Apolipoprotein E (300 aa).

Positions 1-18 are cleaved as a signal peptide; that stretch reads MKVLWAVLVVTLLAGCQA. The interval 74–246 is 8 X 22 AA approximate tandem repeats; it reads VLMEDTMKEV…RLDEVREQME (173 aa). Tandem repeats lie at residues 75–95, 96–117, 118–139, 140–161, 162–183, 184–205, 206–224, and 225–243. The residue at position 137 (M137) is a Methionine sulfoxide. Phosphoserine is present on S141. The segment at 152–162 is LDL and other lipoprotein receptors binding; it reads HLRKLRKRLLR. Heparin is bound at residue 156-159; the sequence is LRKR. The segment at 204-274 is lipid-binding and lipoprotein association; it reads TAALTSQPLQ…GWFEPMMEDI (71 aa). 220–227 lines the heparin pocket; sequence GERLRGRL. Residues 262–274 form a specificity for association with VLDL region; sequence RLKGWFEPMMEDI.

It belongs to the apolipoprotein A1/A4/E family. Homotetramer. May interact with ABCA1; functionally associated with ABCA1 in the biogenesis of HDLs. May interact with APP/A4 amyloid-beta peptide; the interaction is extremely stable in vitro but its physiological significance is unclear. May interact with MAPT. May interact with MAP2. In the cerebrospinal fluid, interacts with secreted SORL1. Interacts with PMEL; this allows the loading of PMEL luminal fragment on ILVs to induce fibril nucleation. Post-translationally, APOE exists as multiple glycosylated and sialylated glycoforms within cells and in plasma. The extent of glycosylation and sialylation are tissue and context specific. In terms of processing, glycated in plasma VLDL. Phosphorylated by FAM20C in the extracellular medium.

Its subcellular location is the secreted. The protein localises to the extracellular space. It localises to the extracellular matrix. The protein resides in the extracellular vesicle. It is found in the endosome. Its subcellular location is the multivesicular body. Its function is as follows. APOE is an apolipoprotein, a protein associating with lipid particles, that mainly functions in lipoprotein-mediated lipid transport between organs via the plasma and interstitial fluids. APOE is a core component of plasma lipoproteins and is involved in their production, conversion and clearance. Apolipoproteins are amphipathic molecules that interact both with lipids of the lipoprotein particle core and the aqueous environment of the plasma. As such, APOE associates with chylomicrons, chylomicron remnants, very low density lipoproteins (VLDL) and intermediate density lipoproteins (IDL) but shows a preferential binding to high-density lipoproteins (HDL). It also binds a wide range of cellular receptors including the LDL receptor/LDLR, the LDL receptor-related proteins LRP1, LRP2 and LRP8 and the very low-density lipoprotein receptor/VLDLR that mediate the cellular uptake of the APOE-containing lipoprotein particles. Finally, APOE also has a heparin-binding activity and binds heparan-sulfate proteoglycans on the surface of cells, a property that supports the capture and the receptor-mediated uptake of APOE-containing lipoproteins by cells. A main function of APOE is to mediate lipoprotein clearance through the uptake of chylomicrons, VLDLs, and HDLs by hepatocytes. APOE is also involved in the biosynthesis by the liver of VLDLs as well as their uptake by peripheral tissues ensuring the delivery of triglycerides and energy storage in muscle, heart and adipose tissues. By participating in the lipoprotein-mediated distribution of lipids among tissues, APOE plays a critical role in plasma and tissues lipid homeostasis. APOE is also involved in two steps of reverse cholesterol transport, the HDLs-mediated transport of cholesterol from peripheral tissues to the liver, and thereby plays an important role in cholesterol homeostasis. First, it is functionally associated with ABCA1 in the biogenesis of HDLs in tissues. Second, it is enriched in circulating HDLs and mediates their uptake by hepatocytes. APOE also plays an important role in lipid transport in the central nervous system, regulating neuron survival and sprouting. The polypeptide is Apolipoprotein E (APOE) (Dinomys branickii (Pacarana)).